The primary structure comprises 236 residues: Ascorbate-specific transmembrane electron transporter 1 (236 aa).

Residues 1-11 are Cytoplasmic-facing; it reads MGLGLGVRAAP. Residues 12–32 form a helical membrane-spanning segment; sequence FTYAAHALAVAAAAMVLVWSI. The 205-residue stretch at 15 to 219 folds into the Cytochrome b561 domain; sequence AAHALAVAAA…FGASVVVAAI (205 aa). The Extracellular segment spans residues 33-50; it reads QFRGGLAIESTNKNLIFN. The chain crosses the membrane as a helical span at residues 51–71; that stretch reads VHPVLMLIGYVIIGGEAIMVY. His52 serves as a coordination point for heme b. L-ascorbate is bound at residue 67 to 75; the sequence is AIMVYRVLP. Over 72–84 the chain is Cytoplasmic; the sequence is RVLPTSNHDTTKL. A helical transmembrane segment spans residues 85–105; sequence IHLILHGIALVLGAVGIYFAF. The heme b site is built by His86 and His120. At 106–122 the chain is on the extracellular side; it reads KNHNESGIANLYSLHSW. 116–125 lines the monodehydro-L-ascorbate radical pocket; sequence LYSLHSWIGI. Residues 123 to 143 traverse the membrane as a helical segment; sequence IGIGTITLYGIQWIIGFVTFF. Topologically, residues 144-153 are cytoplasmic; sequence FPGAAPNVKK. Residues 154 to 174 traverse the membrane as a helical segment; it reads GVLPWHVLFGLFVYILALANA. Position 159 (His159) interacts with heme b. Topologically, residues 175-201 are extracellular; that stretch reads ELGFLEKLTFLESSGLDKYGTEAFLVN. A helical transmembrane segment spans residues 202 to 222; sequence FTALVVVLFGASVVVAAIAPV. Residues 223–236 are Cytoplasmic-facing; it reads RLEEPQGYDPIPEN.

The cofactor is heme b.

The protein localises to the membrane. Its activity is regulated as follows. Inhibited by diethylpyrocarbonate. Two-heme-containing cytochrome. Catalyzes ascorbate-dependent trans-membrane electron transfer by utilizing a concerted H(+)/e(-) transfer mechanism. This chain is Ascorbate-specific transmembrane electron transporter 1 (ZCYB), found in Zea mays (Maize).